Reading from the N-terminus, the 506-residue chain is 2,3-bisphosphoglycerate-independent phosphoglycerate mutase (506 aa).

Mn(2+) contacts are provided by aspartate 13 and serine 63. Serine 63 (phosphoserine intermediate) is an active-site residue. Residues histidine 124, 153 to 154 (RD), arginine 183, arginine 189, 255 to 258 (RADR), and lysine 331 contribute to the substrate site. Positions 397, 401, 438, 439, and 457 each coordinate Mn(2+).

This sequence belongs to the BPG-independent phosphoglycerate mutase family. As to quaternary structure, monomer. Requires Mn(2+) as cofactor.

The catalysed reaction is (2R)-2-phosphoglycerate = (2R)-3-phosphoglycerate. Its pathway is carbohydrate degradation; glycolysis; pyruvate from D-glyceraldehyde 3-phosphate: step 3/5. Catalyzes the interconversion of 2-phosphoglycerate and 3-phosphoglycerate. In Ruegeria sp. (strain TM1040) (Silicibacter sp.), this protein is 2,3-bisphosphoglycerate-independent phosphoglycerate mutase.